The following is a 572-amino-acid chain: Light-independent protochlorophyllide reductase subunit N (572 aa).

Cys106, Cys131, and Cys191 together coordinate [4Fe-4S] cluster. The tract at residues 249–268 (SLDSMKLPSGGREKQINDVN) is disordered.

This sequence belongs to the BchN/ChlN family. In terms of assembly, protochlorophyllide reductase is composed of three subunits; ChlL, ChlN and ChlB. Forms a heterotetramer of two ChlB and two ChlN subunits. The cofactor is [4Fe-4S] cluster.

The protein resides in the plastid. It localises to the chloroplast. The catalysed reaction is chlorophyllide a + oxidized 2[4Fe-4S]-[ferredoxin] + 2 ADP + 2 phosphate = protochlorophyllide a + reduced 2[4Fe-4S]-[ferredoxin] + 2 ATP + 2 H2O. The protein operates within porphyrin-containing compound metabolism; chlorophyll biosynthesis (light-independent). In terms of biological role, component of the dark-operative protochlorophyllide reductase (DPOR) that uses Mg-ATP and reduced ferredoxin to reduce ring D of protochlorophyllide (Pchlide) to form chlorophyllide a (Chlide). This reaction is light-independent. The NB-protein (ChlN-ChlB) is the catalytic component of the complex. The protein is Light-independent protochlorophyllide reductase subunit N of Oltmannsiellopsis viridis (Marine flagellate).